The chain runs to 739 residues: Phosphoribosylformylglycinamidine synthase subunit PurL (739 aa).

The active site involves His53. The ATP site is built by Tyr56 and Lys95. Glu97 lines the Mg(2+) pocket. Residues 98–101 (SHNH) and Arg120 each bind substrate. His99 acts as the Proton acceptor in catalysis. Asp121 provides a ligand contact to Mg(2+). Position 244 (Gln244) interacts with substrate. Asp274 provides a ligand contact to Mg(2+). 318–320 (ESQ) contributes to the substrate binding site. ATP is bound by residues Asp501 and Gly538. Asn539 serves as a coordination point for Mg(2+). Residue Ser541 participates in substrate binding.

This sequence belongs to the FGAMS family. In terms of assembly, monomer. Part of the FGAM synthase complex composed of 1 PurL, 1 PurQ and 2 PurS subunits.

The protein resides in the cytoplasm. The catalysed reaction is N(2)-formyl-N(1)-(5-phospho-beta-D-ribosyl)glycinamide + L-glutamine + ATP + H2O = 2-formamido-N(1)-(5-O-phospho-beta-D-ribosyl)acetamidine + L-glutamate + ADP + phosphate + H(+). The protein operates within purine metabolism; IMP biosynthesis via de novo pathway; 5-amino-1-(5-phospho-D-ribosyl)imidazole from N(2)-formyl-N(1)-(5-phospho-D-ribosyl)glycinamide: step 1/2. Its function is as follows. Part of the phosphoribosylformylglycinamidine synthase complex involved in the purines biosynthetic pathway. Catalyzes the ATP-dependent conversion of formylglycinamide ribonucleotide (FGAR) and glutamine to yield formylglycinamidine ribonucleotide (FGAM) and glutamate. The FGAM synthase complex is composed of three subunits. PurQ produces an ammonia molecule by converting glutamine to glutamate. PurL transfers the ammonia molecule to FGAR to form FGAM in an ATP-dependent manner. PurS interacts with PurQ and PurL and is thought to assist in the transfer of the ammonia molecule from PurQ to PurL. The protein is Phosphoribosylformylglycinamidine synthase subunit PurL of Listeria monocytogenes serotype 4b (strain CLIP80459).